Consider the following 508-residue polypeptide: Steroid 17-alpha-hydroxylase/17,20 lyase (508 aa).

Substrate is bound at residue N202. C442 provides a ligand contact to heme.

This sequence belongs to the cytochrome P450 family. The cofactor is heme.

Its subcellular location is the endoplasmic reticulum membrane. It is found in the microsome membrane. The enzyme catalyses a C21-steroid + reduced [NADPH--hemoprotein reductase] + O2 = a 17alpha-hydroxy-C21-steroid + oxidized [NADPH--hemoprotein reductase] + H2O + H(+). It catalyses the reaction progesterone + reduced [NADPH--hemoprotein reductase] + O2 = 17alpha-hydroxyprogesterone + oxidized [NADPH--hemoprotein reductase] + H2O + H(+). It carries out the reaction pregnenolone + reduced [NADPH--hemoprotein reductase] + O2 = 17alpha-hydroxypregnenolone + oxidized [NADPH--hemoprotein reductase] + H2O + H(+). The catalysed reaction is 17alpha-hydroxyprogesterone + reduced [NADPH--hemoprotein reductase] + O2 = androst-4-ene-3,17-dione + acetate + oxidized [NADPH--hemoprotein reductase] + H2O + 2 H(+). The enzyme catalyses 17alpha-hydroxyprogesterone + reduced [NADPH--hemoprotein reductase] + O2 = 16alpha,17alpha-dihydroxyprogesterone + oxidized [NADPH--hemoprotein reductase] + H2O + H(+). It catalyses the reaction 16alpha,17alpha-dihydroxyprogesterone + reduced [NADPH--hemoprotein reductase] + O2 = 6beta,16alpha,17alpha-trihydroxyprogesterone + oxidized [NADPH--hemoprotein reductase] + H2O + H(+). It carries out the reaction 17alpha-hydroxypregnenolone + reduced [NADPH--hemoprotein reductase] + O2 = 3beta-hydroxyandrost-5-en-17-one + acetate + oxidized [NADPH--hemoprotein reductase] + H2O + 2 H(+). The catalysed reaction is 16alpha,17alpha-dihydroxypregnenolone + reduced [NADPH--hemoprotein reductase] + O2 = 3beta,16alpha-dihydroxy-androst-5-en-17-one + acetate + oxidized [NADPH--hemoprotein reductase] + H2O + 2 H(+). The enzyme catalyses 3beta-hydroxyandrost-5-en-17-one + reduced [NADPH--hemoprotein reductase] + O2 = 3beta,16alpha-dihydroxy-androst-5-en-17-one + oxidized [NADPH--hemoprotein reductase] + H2O + H(+). It catalyses the reaction androst-4-ene-3,17-dione + reduced [NADPH--hemoprotein reductase] + O2 = 16alpha-hydroxyandrost-4-ene-3,17-dione + oxidized [NADPH--hemoprotein reductase] + H2O + H(+). It participates in steroid hormone biosynthesis. Its pathway is steroid biosynthesis; glucocorticoid biosynthesis. With respect to regulation, regulated predominantly by intracellular cAMP levels. The 17,20-lyase activity is stimulated by cytochrome b5, which acts as an allosteric effector increasing the Vmax of the lyase activity. Its function is as follows. A cytochrome P450 monooxygenase involved in corticoid and androgen biosynthesis. Catalyzes 17-alpha hydroxylation of C21 steroids, which is common for both pathways. A second oxidative step, required only for androgen synthesis, involves an acyl-carbon cleavage. The 17-alpha hydroxy intermediates, as part of adrenal glucocorticoids biosynthesis pathway, are precursors of cortisol. Hydroxylates steroid hormones, pregnenolone and progesterone to form 17-alpha hydroxy metabolites, followed by the cleavage of the C17-C20 bond to form C19 steroids, dehydroepiandrosterone (DHEA) and androstenedione. Has 16-alpha hydroxylase activity. Catalyzes 16-alpha hydroxylation of 17-alpha hydroxy pregnenolone, followed by the cleavage of the C17-C20 bond to form 16-alpha-hydroxy DHEA. Also 16-alpha hydroxylates androgens, relevant for estriol synthesis. Mechanistically, uses molecular oxygen inserting one oxygen atom into a substrate, and reducing the second into a water molecule, with two electrons provided by NADPH via cytochrome P450 reductase (CPR; NADPH-ferrihemoprotein reductase). The polypeptide is Steroid 17-alpha-hydroxylase/17,20 lyase (CYP17A1) (Macaca fascicularis (Crab-eating macaque)).